Here is a 72-residue protein sequence, read N- to C-terminus: Translational regulator CsrA (72 aa).

It belongs to the CsrA/RsmA family. Homodimer; the beta-strands of each monomer intercalate to form a hydrophobic core, while the alpha-helices form wings that extend away from the core.

The protein localises to the cytoplasm. Functionally, a translational regulator that binds mRNA to regulate translation initiation and/or mRNA stability. Usually binds in the 5'-UTR at or near the Shine-Dalgarno sequence preventing ribosome-binding, thus repressing translation. Its main target seems to be the major flagellin gene, while its function is anatagonized by FliW. The protein is Translational regulator CsrA of Clostridium novyi (strain NT).